Here is a 295-residue protein sequence, read N- to C-terminus: GTPase Era (295 aa).

The 168-residue stretch at 5–172 (YCGYAAIIGR…EQAVHQLMPE (168 aa)) folds into the Era-type G domain. A G1 region spans residues 13–20 (GRPNVGKS). 13–20 (GRPNVGKS) is a GTP binding site. Residues 39–43 (QTTRY) form a G2 region. Residues 60 to 63 (DTPG) form a G3 region. Residues 60-64 (DTPGL) and 121-124 (NKVD) each bind GTP. Positions 121 to 124 (NKVD) are G4. The tract at residues 151–153 (LSA) is G5. The KH type-2 domain occupies 203–279 (LGQEIPYSLA…FLQLWVKVKS (77 aa)).

Belongs to the TRAFAC class TrmE-Era-EngA-EngB-Septin-like GTPase superfamily. Era GTPase family. In terms of assembly, monomer.

The protein resides in the cytoplasm. Its subcellular location is the cell inner membrane. In terms of biological role, an essential GTPase that binds both GDP and GTP, with rapid nucleotide exchange. Plays a role in 16S rRNA processing and 30S ribosomal subunit biogenesis and possibly also in cell cycle regulation and energy metabolism. This Coxiella burnetii (strain RSA 331 / Henzerling II) protein is GTPase Era.